The chain runs to 397 residues: Ubiquitin-like modifier-activating enzyme 5 (397 aa).

ATP-binding residues include glycine 77, aspartate 98, lysine 121, asparagine 144, and asparagine 178. Positions 220 and 223 each coordinate Zn(2+). Cysteine 244 serves as the catalytic Glycyl thioester intermediate. Cysteine 297 and cysteine 302 together coordinate Zn(2+). The UFM1-interacting sequence (UIS) motif lies at 329-341 (VVHEDNDWGIELV). A linker region spans residues 342–372 (SEVSEEELKAASGPVPDLPEGIKVAYTIPIT). Positions 382 to 397 (DSEQSLDELMAQMKNL) match the UFC1-binding sequence (UFC) motif.

Belongs to the ubiquitin-activating E1 family. UBA5 subfamily. As to quaternary structure, homodimer; homodimerization is required for ufm1 activation. Interacts (via UIS motif) with ufm1; binds ufm1 via a trans-binding mechanism in which ufm1 interacts with distinct sites in both subunits of the uba5 homodimer. Interacts (via C-terminus) with ufc1.

The protein localises to the cytoplasm. It is found in the nucleus. Its subcellular location is the endoplasmic reticulum membrane. The protein resides in the golgi apparatus. In terms of biological role, E1-like enzyme which specifically catalyzes the first step in ufmylation. Activates ufm1 by first adenylating its C-terminal glycine residue with ATP, and thereafter linking this residue to the side chain of a cysteine residue in E1, yielding a ufm1-E1 thioester and free AMP. Activates ufm1 via a trans-binding mechanism, in which ufm1 interacts with distinct sites in both subunits of the uba5 homodimer. Trans-binding also promotes stabilization of the uba5 homodimer, and enhances ATP-binding. Transfer of ufm1 from uba5 to the E2-like enzyme UFC1 also takes place using a trans mechanism. Ufmylation plays a key role in various processes, such as ribosome recycling, response to DNA damage, interferon response or reticulophagy (also called ER-phagy). This chain is Ubiquitin-like modifier-activating enzyme 5, found in Xenopus laevis (African clawed frog).